The sequence spans 116 residues: G antigen 2A (116 aa).

Residues 1-116 form a disordered region; that stretch reads MSWRGRSTYR…PEEGEKQSQC (116 aa). 2 stretches are compositionally biased toward acidic residues: residues 31 to 44 and 86 to 95; these read FSDEVEPATPEEGE and ECEDGPDGQE. Over residues 102–116 the composition is skewed to basic and acidic residues; it reads EEVKTPEEGEKQSQC.

Belongs to the GAGE family.

This is G antigen 2A (GAGE2A) from Homo sapiens (Human).